The chain runs to 100 residues: Integration host factor subunit alpha (100 aa).

It belongs to the bacterial histone-like protein family. As to quaternary structure, heterodimer of an alpha and a beta chain.

In terms of biological role, this protein is one of the two subunits of integration host factor, a specific DNA-binding protein that functions in genetic recombination as well as in transcriptional and translational control. This Phenylobacterium zucineum (strain HLK1) protein is Integration host factor subunit alpha.